A 358-amino-acid polypeptide reads, in one-letter code: HTH-type transcriptional regulator IpsA (358 aa).

An HTH lacI-type domain is found at 8 to 63 (GTLASIAAKLGISRTTVSNAYNRPEQLSAELRQRILDTAEDMGYLGPDPVARSLRT). Positions 10–29 (LASIAAKLGISRTTVSNAYN) form a DNA-binding region, H-T-H motif.

As to quaternary structure, homodimer.

Its activity is regulated as follows. Myo-inositol causes the dissociation of the IpsA-DNA complex in vitro. Functionally, plays a role in the regulation of cell wall biogenesis. Inositol-dependent transcriptional activator of ino1, which encodes inositol phosphate synthase. Also regulates other target genes, which are most likely involved in the synthesis of inositol-derived cell wall components and mycothiol. Acts by binding to a conserved palindromic motif within the promoter regions. In Corynebacterium glutamicum (strain ATCC 13032 / DSM 20300 / JCM 1318 / BCRC 11384 / CCUG 27702 / LMG 3730 / NBRC 12168 / NCIMB 10025 / NRRL B-2784 / 534), this protein is HTH-type transcriptional regulator IpsA.